Reading from the N-terminus, the 588-residue chain is Sulfite reductase [NADPH] hemoprotein beta-component (588 aa).

The [4Fe-4S] cluster site is built by cysteine 443, cysteine 449, cysteine 488, and cysteine 492. Cysteine 492 contacts siroheme.

Belongs to the nitrite and sulfite reductase 4Fe-4S domain family. Alpha(8)-beta(8). The alpha component is a flavoprotein, the beta component is a hemoprotein. Siroheme serves as cofactor. The cofactor is [4Fe-4S] cluster.

The catalysed reaction is hydrogen sulfide + 3 NADP(+) + 3 H2O = sulfite + 3 NADPH + 4 H(+). Its pathway is sulfur metabolism; hydrogen sulfide biosynthesis; hydrogen sulfide from sulfite (NADPH route): step 1/1. Functionally, component of the sulfite reductase complex that catalyzes the 6-electron reduction of sulfite to sulfide. This is one of several activities required for the biosynthesis of L-cysteine from sulfate. This is Sulfite reductase [NADPH] hemoprotein beta-component from Actinobacillus succinogenes (strain ATCC 55618 / DSM 22257 / CCUG 43843 / 130Z).